Reading from the N-terminus, the 152-residue chain is MNKRRAKGKSHSIRPARAGAPKWVRLTREEVEMLVEELAKRGYTPSMIGIILRDQYGIPLVKQIVGKKVTQILEERGLAPQIPEDLFNLIRKAVNVRRHINEYPRDKTAKKGLEEIESKIRRLTRYYKGIGKLPQEWVYDPAKAELLVAGAS.

Belongs to the universal ribosomal protein uS15 family. In terms of assembly, part of the 30S ribosomal subunit.

The chain is Small ribosomal subunit protein uS15 from Saccharolobus solfataricus (strain ATCC 35092 / DSM 1617 / JCM 11322 / P2) (Sulfolobus solfataricus).